The chain runs to 428 residues: Histidinol dehydrogenase (428 aa).

Y127, Q189, and N212 together coordinate NAD(+). Substrate contacts are provided by S235, Q257, and H260. Positions 257 and 260 each coordinate Zn(2+). Residues E325 and H326 each act as proton acceptor in the active site. Positions 326, 359, 413, and 418 each coordinate substrate. D359 is a binding site for Zn(2+). H418 serves as a coordination point for Zn(2+).

It belongs to the histidinol dehydrogenase family. Zn(2+) serves as cofactor.

The catalysed reaction is L-histidinol + 2 NAD(+) + H2O = L-histidine + 2 NADH + 3 H(+). It functions in the pathway amino-acid biosynthesis; L-histidine biosynthesis; L-histidine from 5-phospho-alpha-D-ribose 1-diphosphate: step 9/9. Its function is as follows. Catalyzes the sequential NAD-dependent oxidations of L-histidinol to L-histidinaldehyde and then to L-histidine. The sequence is that of Histidinol dehydrogenase from Prochlorococcus marinus subsp. pastoris (strain CCMP1986 / NIES-2087 / MED4).